We begin with the raw amino-acid sequence, 438 residues long: Xylose isomerase (438 aa).

Residues His103 and Asp106 contribute to the active site. Positions 234, 270, 273, 298, 309, 311, and 341 each coordinate Mg(2+).

This sequence belongs to the xylose isomerase family. In terms of assembly, homotetramer. Mg(2+) serves as cofactor.

It is found in the cytoplasm. It carries out the reaction alpha-D-xylose = alpha-D-xylulofuranose. This Bacteroides thetaiotaomicron (strain ATCC 29148 / DSM 2079 / JCM 5827 / CCUG 10774 / NCTC 10582 / VPI-5482 / E50) protein is Xylose isomerase.